We begin with the raw amino-acid sequence, 106 residues long: Adipokinetic hormone/corazonin-related peptide (106 aa).

The N-terminal stretch at 1–25 is a signal peptide; that stretch reads MRNSIYKLIMFAVLCMVLTSSLSYA. Position 26 is a pyrrolidone carboxylic acid (Gln-26). Ala-35 is subject to Alanine amide. Positions 39 to 106 are excised as a propeptide; sequence SLAEAAQSTG…GLPLFSNGHL (68 aa).

It belongs to the AKH/HRTH/RPCH family. Only expressed in the head and thorax body segments of adults. Is more expressed in adult males than in females.

Its subcellular location is the secreted. In terms of biological role, neuropeptide with neuromodulator or neurotransmitter role that activates the adipokinetic hormone/corazonin-related peptide receptor (ACPR). May function in regulation of post-ecdysis activities. Does not activate the A.gambiae adipokinetic hormone (AKH) and corazonin (CRZ) receptors. The chain is Adipokinetic hormone/corazonin-related peptide from Aedes aegypti (Yellowfever mosquito).